Reading from the N-terminus, the 521-residue chain is Adenosylhomocysteinase-like 1 (521 aa).

The interval 1–92 (MNNLADTVVV…EKVQKNSKGS (92 aa)) is disordered. The segment covering 54–73 (RSLSASSTDSFSSASYTGSS) has biased composition (low complexity). Substrate is bound by residues aspartate 220 and glutamate 245. 246-248 (SVT) is a binding site for NAD(+). Positions 275 and 279 each coordinate substrate. Residues 311–316 (GDVGKG), glutamate 332, 388–390 (MGH), asparagine 435, lysine 515, 515–519 (KPNYY), and tyrosine 519 contribute to the NAD(+) site.

The protein belongs to the adenosylhomocysteinase family. As to quaternary structure, interacts with Ahcy; the interaction may negatively regulate Ahcy catalytic activity. NAD(+) is required as a cofactor.

Its function is as follows. Might play a role in the regulation of methionine metabolism possibly by binding and inactivating Ahcy. This is Adenosylhomocysteinase-like 1 from Drosophila melanogaster (Fruit fly).